The chain runs to 432 residues: Anaerobic glycerol-3-phosphate dehydrogenase subunit B (432 aa).

It belongs to the anaerobic G-3-P dehydrogenase subunit B family. Composed of a catalytic GlpA/B dimer and of membrane bound GlpC. The cofactor is FMN.

It catalyses the reaction a quinone + sn-glycerol 3-phosphate = dihydroxyacetone phosphate + a quinol. The protein operates within polyol metabolism; glycerol degradation via glycerol kinase pathway; glycerone phosphate from sn-glycerol 3-phosphate (anaerobic route): step 1/1. Its function is as follows. Conversion of glycerol 3-phosphate to dihydroxyacetone. Uses fumarate or nitrate as electron acceptor. The polypeptide is Anaerobic glycerol-3-phosphate dehydrogenase subunit B (glpB) (Haemophilus influenzae (strain ATCC 51907 / DSM 11121 / KW20 / Rd)).